The chain runs to 303 residues: Beta-carotene 3-hydroxylase 2, chloroplastic (303 aa).

The transit peptide at 1 to 52 (MAAGLSTIAVTLKPLNRSSFSANHPISTAVFPPSLRFNGFRRRKILTVCFVV) directs the protein to the chloroplast. 2 consecutive transmembrane segments (helical) span residues 96 to 116 (YLIA…MAVY) and 130 to 150 (VLEM…MEFW). One can recognise a Fatty acid hydroxylase domain in the interval 143–270 (AAVGMEFWAR…KFKGVPYGLF (128 aa)). A Histidine box-1 motif is present at residues 155–160 (HRALWH). The Histidine box-2 signature appears at 165-171 (NMHESHH). Transmembrane regions (helical) follow at residues 180 to 200 (LNDV…YYGF) and 206 to 226 (VPGL…AYMF). Positions 228 to 233 (HDGLVH) match the Histidine box-3 motif. A Histidine box-4 motif is present at residues 254-258 (HQLHH).

The protein belongs to the sterol desaturase family. In terms of assembly, homodimer. Expressed in leaves, flowers, stems, roots and siliques.

The protein localises to the plastid. It localises to the chloroplast membrane. The catalysed reaction is all-trans-beta-carotene + 4 reduced [2Fe-2S]-[ferredoxin] + 2 O2 + 4 H(+) = all-trans-zeaxanthin + 4 oxidized [2Fe-2S]-[ferredoxin] + 2 H2O. In terms of biological role, nonheme diiron monooxygenase involved in the biosynthesis of xanthophylls. Specific for beta-ring hydroxylations of beta-carotene. Also has a low activity toward the beta- and epsilon-rings of alpha-carotene. No activity with acyclic carotenoids such as lycopene and neurosporene. Uses ferredoxin as an electron donor. The chain is Beta-carotene 3-hydroxylase 2, chloroplastic (BETA-OHASE 2) from Arabidopsis thaliana (Mouse-ear cress).